A 320-amino-acid chain; its full sequence is Malate dehydrogenase (320 aa).

Residues 10–15 and Asp-34 each bind NAD(+); that span reads GAGQIG. Substrate-binding residues include Arg-83 and Arg-89. NAD(+)-binding positions include Asn-96 and 119-121; that span reads ITN. Substrate is bound by residues Asn-121 and Arg-152. His-176 acts as the Proton acceptor in catalysis.

It belongs to the LDH/MDH superfamily. MDH type 3 family.

The catalysed reaction is (S)-malate + NAD(+) = oxaloacetate + NADH + H(+). Functionally, catalyzes the reversible oxidation of malate to oxaloacetate. The polypeptide is Malate dehydrogenase (Roseobacter denitrificans (strain ATCC 33942 / OCh 114) (Erythrobacter sp. (strain OCh 114))).